Reading from the N-terminus, the 345-residue chain is N-acetyl-gamma-glutamyl-phosphate reductase (345 aa).

C149 is an active-site residue.

This sequence belongs to the NAGSA dehydrogenase family. Type 1 subfamily.

Its subcellular location is the cytoplasm. It carries out the reaction N-acetyl-L-glutamate 5-semialdehyde + phosphate + NADP(+) = N-acetyl-L-glutamyl 5-phosphate + NADPH + H(+). It functions in the pathway amino-acid biosynthesis; L-arginine biosynthesis; N(2)-acetyl-L-ornithine from L-glutamate: step 3/4. Catalyzes the NADPH-dependent reduction of N-acetyl-5-glutamyl phosphate to yield N-acetyl-L-glutamate 5-semialdehyde. This is N-acetyl-gamma-glutamyl-phosphate reductase from Halalkalibacterium halodurans (strain ATCC BAA-125 / DSM 18197 / FERM 7344 / JCM 9153 / C-125) (Bacillus halodurans).